Here is a 210-residue protein sequence, read N- to C-terminus: Chloramphenicol acetyltransferase (210 aa).

His79 is a catalytic residue.

The protein belongs to the transferase hexapeptide repeat family.

It carries out the reaction chloramphenicol + acetyl-CoA = chloramphenicol 3-acetate + CoA. Functionally, this enzyme is an effector of chloramphenicol resistance in bacteria. In Morganella morganii (Proteus morganii), this protein is Chloramphenicol acetyltransferase (cat).